We begin with the raw amino-acid sequence, 444 residues long: L-ornithine N(5)-monooxygenase (444 aa).

FAD is bound by residues 40–48 (ERQPAFGWH) and Q59. Position 64 (K64) interacts with substrate. V125 is an FAD binding site. Residues 211-214 (AGQS) and R236 contribute to the NADP(+) site. Residues 250 to 253 (NEIF) and N280 contribute to the substrate site. An NADP(+)-binding site is contributed by 280-282 (NYA). FAD is bound at residue 408–410 (RCC). Basic residues predominate over residues 420 to 432 (SARRSKTGSRPRT). The tract at residues 420-444 (SARRSKTGSRPRTMKAWPGPRTKND) is disordered.

This sequence belongs to the lysine N(6)-hydroxylase/L-ornithine N(5)-oxygenase family. It depends on FAD as a cofactor.

It catalyses the reaction L-ornithine + NADPH + O2 = N(5)-hydroxy-L-ornithine + NADP(+) + H2O. It functions in the pathway siderophore biosynthesis; ornibactin biosynthesis. In terms of biological role, catalyzes the conversion of L-ornithine to N(5)-hydroxyornithine, the first step in the biosynthesis of all hydroxamate-containing siderophores, such as ornibactin. The polypeptide is L-ornithine N(5)-monooxygenase (Burkholderia cepacia (Pseudomonas cepacia)).